The sequence spans 150 residues: Guanine nucleotide-binding protein subunit gamma 2 (150 aa).

The span at 1–11 (MRGEANGEEEQ) shows a compositional bias: acidic residues. The interval 1 to 59 (MRGEANGEEEQQPPRRNHLRDDAEEEEEVERRAARPVSGQQQQQQRRRPTDVGGGAAMR) is disordered. Residues 65–97 (GKHRLSAAIARLDQELQSLQDELNELETMEPAS) are a coiled coil. The G protein gamma domain occupies 71-137 (AAIARLDQEL…RWFQRVRSSR (67 aa)).

G proteins are composed of 3 units, alpha, beta and gamma. Interacts with the beta subunit RGB1.

The protein resides in the cell membrane. Functionally, guanine nucleotide-binding proteins (G proteins) are involved as modulators or transducers in various transmembrane signaling systems. The chain is Guanine nucleotide-binding protein subunit gamma 2 from Oryza sativa subsp. indica (Rice).